A 302-amino-acid polypeptide reads, in one-letter code: MMTLSSMPVTHRADAKSGHSFDANRHWAASLTLGFCAQNSGDTRVTRMNIARHYGPLRVQRPFYPEGKDGCCHVYLLHPPGGVVSGDALNIDISLTKGAHSLITTPAANKLYKADSNGVAWSQTTNLKVDDNATLEWLPQETLAFDGSRGVQVFNIELAKTAKCLGWEILGLGRPASDLPFATGCIEQRFKLTQDGKPLWLERQNLDPTHPRFNGKWGQGGATVHGTFWTVGLSDPTAAIAALREQLPPSNNWAATYRRDVLLVRYLGHERNQVWKLFEQVRNILRPLLSGHQATIPRIWLT.

It belongs to the UreD family. In terms of assembly, ureD, UreF and UreG form a complex that acts as a GTP-hydrolysis-dependent molecular chaperone, activating the urease apoprotein by helping to assemble the nickel containing metallocenter of UreC. The UreE protein probably delivers the nickel.

It localises to the cytoplasm. Required for maturation of urease via the functional incorporation of the urease nickel metallocenter. The sequence is that of Urease accessory protein UreD from Pseudoalteromonas translucida (strain TAC 125).